A 412-amino-acid chain; its full sequence is MSIENSAVSDHSGVNKVVLAYSGGLDTSAIIPWLKETYDNCEIVAFCADVGQGDAELEGLYEKAIASGASECYIVDLKEELVADYIYPTIATGAIYEGTYLLGTSMARPIIAKAQVEVARKVGADAVCHGCTGKGNDQVRFEGCFAALAPDLKVIAPWREWEMVSREDLLDYLAERNIATAASATKIYSRDANAWHISHEGGELEDPWNEPSKGVWTMTVAPEDAPNQPEYVSLELEQGKITKVNGEALSPYKALMVLNEVAGAHGVGRIDITENRLVGMKSRGCYETPGGTVMFAALRAIEELVLDKTSREWREQVGAQMAHLVYDGRWFTPLCESLLGASKPLADLVNGEVVVKLYKGQASVVKKRSPNSLYSEEFATFGADDVYNQKDAEGFIRLYSLSSRIRALHSQK.

ATP contacts are provided by residues Ala20 to Ser28 and Ala48. 2 residues coordinate L-citrulline: Tyr100 and Ser105. Gly130 lines the ATP pocket. Positions 132, 136, and 137 each coordinate L-aspartate. Asn136 provides a ligand contact to L-citrulline. L-citrulline contacts are provided by Arg140, Ser189, Ser198, Glu274, and Tyr286.

This sequence belongs to the argininosuccinate synthase family. Type 1 subfamily. In terms of assembly, homotetramer.

It localises to the cytoplasm. It carries out the reaction L-citrulline + L-aspartate + ATP = 2-(N(omega)-L-arginino)succinate + AMP + diphosphate + H(+). The protein operates within amino-acid biosynthesis; L-arginine biosynthesis; L-arginine from L-ornithine and carbamoyl phosphate: step 2/3. This chain is Argininosuccinate synthase, found in Shewanella pealeana (strain ATCC 700345 / ANG-SQ1).